The sequence spans 568 residues: Adenine deaminase (568 aa).

Belongs to the metallo-dependent hydrolases superfamily. Adenine deaminase family. It depends on Mn(2+) as a cofactor.

The enzyme catalyses adenine + H2O + H(+) = hypoxanthine + NH4(+). The protein is Adenine deaminase of Clostridium perfringens (strain ATCC 13124 / DSM 756 / JCM 1290 / NCIMB 6125 / NCTC 8237 / Type A).